The following is a 697-amino-acid chain: Methionine--tRNA ligase (697 aa).

The 'HIGH' region motif lies at 11-21; the sequence is PYANGPIHLGH. Zn(2+) contacts are provided by Cys142, Cys145, Cys155, and Cys158. The short motif at 343 to 347 is the 'KMSKS' region element; sequence KMSKS. An ATP-binding site is contributed by Lys346. The tRNA-binding domain maps to 595-697; it reads DFMKVEMTVA…DECKVGDKLA (103 aa).

Belongs to the class-I aminoacyl-tRNA synthetase family. MetG type 1 subfamily. As to quaternary structure, homodimer. The cofactor is Zn(2+).

It is found in the cytoplasm. It catalyses the reaction tRNA(Met) + L-methionine + ATP = L-methionyl-tRNA(Met) + AMP + diphosphate. Functionally, is required not only for elongation of protein synthesis but also for the initiation of all mRNA translation through initiator tRNA(fMet) aminoacylation. This chain is Methionine--tRNA ligase, found in Psychrobacter sp. (strain PRwf-1).